Reading from the N-terminus, the 265-residue chain is Apolipoprotein A-I (265 aa).

The signal sequence occupies residues 1–18; it reads MKAVLLTLAVLFLTGSQA. A run of 2 repeats spans residues 67-88 and 89-110. The segment at 67–265 is 10 X approximate tandem repeats; sequence LKLLDNWDSL…DEASKKLNAQ (199 aa). Methionine sulfoxide is present on Met109. The stretch at 111–121 is one 3; half-length repeat; it reads KDLEEVKQKVQ. A run of 5 repeats spans residues 122-142, 144-165, 166-187, 188-209, and 210-230. The stretch at 231–241 is one 9; half-length repeat; the sequence is PALEDLRQGLV. Residues 242 to 265 form repeat 10; sequence PVLESLKVSILAAIDEASKKLNAQ.

It belongs to the apolipoprotein A1/A4/E family. In terms of assembly, homodimer. Interacts with APOA1BP and CLU. Component of a sperm activating protein complex (SPAP), consisting of APOA1, an immunoglobulin heavy chain, an immunoglobulin light chain and albumin. Interacts with NDRG1. Interacts with SCGB3A2. Interacts with NAXE and YJEFN3. In terms of processing, glycosylated. Post-translationally, palmitoylated. Phosphorylation sites are present in the extracellular medium. In terms of tissue distribution, major protein of plasma HDL, also found in chylomicrons.

The protein resides in the secreted. Functionally, participates in the reverse transport of cholesterol from tissues to the liver for excretion by promoting cholesterol efflux from tissues and by acting as a cofactor for the lecithin cholesterol acyltransferase (LCAT). As part of the SPAP complex, activates spermatozoa motility. The polypeptide is Apolipoprotein A-I (APOA1) (Tursiops truncatus (Atlantic bottle-nosed dolphin)).